Here is a 192-residue protein sequence, read N- to C-terminus: Cell division protein SepF (192 aa).

Residues 15 to 70 (GDPLEYEEDGEEYEQVYREENKREEARRATAGTAAAATPTAAAQASDAAPMGSGPA) are disordered. Acidic residues predominate over residues 18–28 (LEYEEDGEEYE). Positions 29–42 (QVYREENKREEARR) are enriched in basic and acidic residues. The span at 43 to 63 (ATAGTAAAATPTAAAQASDAA) shows a compositional bias: low complexity.

It belongs to the SepF family. In terms of assembly, homodimer. Interacts with FtsZ.

The protein resides in the cytoplasm. Functionally, cell division protein that is part of the divisome complex and is recruited early to the Z-ring. Probably stimulates Z-ring formation, perhaps through the cross-linking of FtsZ protofilaments. Its function overlaps with FtsA. This Gloeobacter violaceus (strain ATCC 29082 / PCC 7421) protein is Cell division protein SepF.